We begin with the raw amino-acid sequence, 866 residues long: Potassium voltage-gated channel subfamily KQT member 3 (866 aa).

A disordered region spans residues 1 to 42 (MGLKARRPAGAAGGGGDGGGGGGGAANPAGGDAAAAGDEERK). Residues 1–120 (MGLKARRPAG…IYDALERPRG (120 aa)) lie on the Cytoplasmic side of the membrane. Over residues 11–25 (AAGGGGDGGGGGGGA) the composition is skewed to gly residues. Over residues 26–36 (ANPAGGDAAAA) the composition is skewed to low complexity. Threonine 81 is modified (phosphothreonine). The helical transmembrane segment at 121–143 (WALLYHALVFLIVLGCLILAVLT) threads the bilayer. At 144–153 (TFREYETVSG) the chain is on the extracellular side. A helical membrane pass occupies residues 154–175 (DWLLLLETFAIFIFGAEFALRI). The Cytoplasmic portion of the chain corresponds to 176-193 (WAAGCCCRYKGWRGRLKF). Residues 194-213 (ARKPLCMLDIFVLIASVPVV) traverse the membrane as a helical segment. Residues 214-225 (AVGNQGNVLATS) lie on the Extracellular side of the membrane. A helical; Voltage-sensor transmembrane segment spans residues 226–244 (LRSLRFLQILRMLRMDRRG). Arginine 243 serves as a coordination point for a 1,2-diacyl-sn-glycero-3-phospho-(1D-myo-inositol-4,5-bisphosphate). Over 245-256 (GTWKLLGSAICA) the chain is Cytoplasmic. A helical membrane pass occupies residues 257 to 282 (HSKELITAWYIGFLTLILSSFLVYLV). A 1,2-diacyl-sn-glycero-3-phospho-(1D-myo-inositol-4,5-bisphosphate) is bound at residue lysine 259. The Extracellular segment spans residues 283-302 (EKDVPEVDAQGEEMKEEFET). Positions 303-315 (YADALWWGLITLA) form an intramembrane region, pore-forming. The short motif at 316 to 321 (TIGYGD) is the Selectivity filter element. Residues 316 to 326 (TIGYGDKTPKT) are Extracellular-facing. The chain crosses the membrane as a helical span at residues 327–353 (WEGRLIAATFSLIGVSFFALPAGILGS). Residues 354-866 (GLALKVQEQH…SIWTPSGKPT (513 aa)) lie on the Cytoplasmic side of the membrane. Positions 356 to 537 (ALKVQEQHRQ…RLYKKKFKET (182 aa)) are mediates interaction with calmodulin. Residue lysine 366 coordinates a 1,2-diacyl-sn-glycero-3-phospho-(1D-myo-inositol-4,5-bisphosphate). Disordered regions lie at residues 574-617 (PGPP…EDQS), 656-676 (GFSP…EDRR), and 757-866 (QVEL…GKPT). Over residues 837–866 (EPFTPSGSLPLSSTGDGISDSIWTPSGKPT) the composition is skewed to polar residues.

The protein belongs to the potassium channel family. KQT (TC 1.A.1.15) subfamily. Kv7.3/KCNQ3 sub-subfamily. As to quaternary structure, heterotetramer with KCNQ2; forms heterotetrameric native M-channel responsible for the M-current. Interacts with calmodulin; the interaction is calcium-independent, constitutive and participates in the proper assembly of a functional M-channel. Heteromultimer with KCNQ5. May associate with KCNE2. Interacts with IQCJ-SCHIP1. Interacts (via the pore module) with SLC5A3/SMIT1; forms a coregulatory complex that alters ion selectivity, voltage dependence and gating kinetics of the channel. In terms of processing, KCNQ2/KCNQ3 are ubiquitinated by NEDD4L. Ubiquitination leads to protein degradation. Degradation induced by NEDD4L is inhibited by USP36.

The protein resides in the cell membrane. It carries out the reaction K(+)(in) = K(+)(out). It catalyses the reaction Rb(+)(in) = Rb(+)(out). The catalysed reaction is Cs(+)(in) = Cs(+)(out). The enzyme catalyses Na(+)(in) = Na(+)(out). With respect to regulation, phosphatidylinositol-4,5-bisphosphate (PIP2) potentiates the activation of KCNQ channels by enhancing the electro-mechanical coupling of the voltage-sensing domain (VSD) and the pore-forming domain (PD). In the closed state of the channel, PIP2 is anchored at the S2-S3 loop; upon channel activation, PIP2 interacts with the S4-S5 linker and is involved in channel gating. Calcium suppresses KCNQ2-KCNQ3 channel currents, with calcium-bound calmodulin inducing a change in channel configuration which leads to the reduction of channel affinity for PIP2 and subsequent current suppression. Its function is as follows. Pore-forming subunit of the voltage-gated potassium (Kv) M-channel which is responsible for the M-current, a key controller of neuronal excitability. M-channel is composed of pore-forming subunits KCNQ2 and KCNQ3 assembled as heterotetramers. The native M-current has a slowly activating and deactivating potassium conductance which plays a critical role in determining the subthreshold electrical excitability of neurons as well as the responsiveness to synaptic inputs. M-channel is selectively permeable in vitro to other cations besides potassium, in decreasing order of affinity K(+) &gt; Rb(+) &gt; Cs(+) &gt; Na(+). M-channel association with SLC5A3/SMIT1 alters channel ion selectivity, increasing Na(+) and Cs(+) permeation relative to K(+). Suppressed by activation of M1 muscarinic acetylcholine receptors. KCNQ3 also associates with KCNQ5 to form a functional channel in vitro and may also contribute to the M-current in brain. The polypeptide is Potassium voltage-gated channel subfamily KQT member 3 (Bos taurus (Bovine)).